The primary structure comprises 126 residues: UPF0102 protein gll3754 (126 aa).

This sequence belongs to the UPF0102 family.

The sequence is that of UPF0102 protein gll3754 from Gloeobacter violaceus (strain ATCC 29082 / PCC 7421).